Here is a 322-residue protein sequence, read N- to C-terminus: Sideroflexin-2 (322 aa).

The residue at position 1 (M1) is an N-acetylmethionine. Helical transmembrane passes span 100 to 122 (MIITGFMLQFYRTMPAVIFWQWV), 142 to 164 (SVRQMALSYFTATTTAVATAVGM), 174 to 192 (LVGRWVPFAAVAAANCVNI), 228 to 250 (VVISRITMSAPGMILLPVIMERL), and 265 to 287 (PLQVMLSGCFLIFMVPVACGLFP).

It belongs to the sideroflexin family. Widely expressed, highest levels in kidney, liver, and pancreas.

Its subcellular location is the mitochondrion inner membrane. It is found in the mitochondrion outer membrane. It catalyses the reaction L-serine(in) = L-serine(out). Mitochondrial amino-acid transporter that mediates transport of serine into mitochondria. Involved in mitochondrial iron homeostasis by regulating heme biosynthesis. This is Sideroflexin-2 from Homo sapiens (Human).